Reading from the N-terminus, the 84-residue chain is Delta-thalatoxin-Hhe1a (84 aa).

An N-terminal signal peptide occupies residues 1 to 19 (MAYQKIVFVALMLVLAVSA). The propeptide occupies 20 to 33 (MRLPDQQDQDISVA). Cystine bridges form between C38–C78, C40–C68, and C61–C79.

Belongs to the sea anemone sodium channel inhibitory toxin family. Type II subfamily.

Its subcellular location is the secreted. It localises to the nematocyst. Its function is as follows. Binds specifically to the voltage-gated sodium channel (Nav) and delays its inactivation. The chain is Delta-thalatoxin-Hhe1a from Heterodactyla hemprichii (Hemprich's sea anemone).